Reading from the N-terminus, the 758-residue chain is Thiosulfate reductase molybdopterin-containing subunit PhsA (758 aa).

Residues 1-30 constitute a signal peptide (tat-type signal); the sequence is MSISRRSFLQGVGIGCSACALGAFPPGALA. In terms of domain architecture, 4Fe-4S Mo/W bis-MGD-type spans 41–97; sequence TTLTPSLCEMCSFRCPIQAQVVNNKTVFIQGNPSAPQQGTRICARGGSGVSLVNDPQ. 4 residues coordinate [4Fe-4S] cluster: Cys-48, Cys-51, Cys-55, and Cys-83.

Belongs to the prokaryotic molybdopterin-containing oxidoreductase family. As to quaternary structure, composed of three subunits: PhsA, PhsB and PhsC. [4Fe-4S] cluster is required as a cofactor. The cofactor is Mo-bis(molybdopterin guanine dinucleotide). Post-translationally, predicted to be exported by the Tat system. The position of the signal peptide cleavage has not been experimentally proven.

The protein resides in the periplasm. It catalyses the reaction a quinone + hydrogen sulfide + sulfite + 2 H(+) = thiosulfate + a quinol. Component of the PhsABC thiosulfate reductase that catalyzes the reduction of thiosulfate to sulfite and hydrogen sulfide, with menaquinol as the sole electron donor. Proton motive force (PMF) is required to drive transmembrane electron transfer within the reductase. The PhsA subunit contains the active site molybdenum-bis(molybdopterin guanine dinucleotide) (Mo-bis-MGD) cofactor. The polypeptide is Thiosulfate reductase molybdopterin-containing subunit PhsA (Salmonella typhimurium (strain LT2 / SGSC1412 / ATCC 700720)).